We begin with the raw amino-acid sequence, 118 residues long: Telomere bouquet protein 2 (118 aa).

Interacts with bqt1. The bqt1-bqt2-sad1 complex binds rap1.

The protein localises to the cytoplasm. It localises to the nucleus. The protein resides in the cytoskeleton. It is found in the microtubule organizing center. Its subcellular location is the spindle pole body. The protein localises to the chromosome. It localises to the telomere. Involved in chromosome segregation. During meiotic prophase, connects telomeres to the spindle pole body by forming a bridge between the telomere protein rap1 and the spindle pole body protein sad1. The sequence is that of Telomere bouquet protein 2 (bqt2) from Schizosaccharomyces pombe (strain 972 / ATCC 24843) (Fission yeast).